The chain runs to 110 residues: Large ribosomal subunit protein uL24 (110 aa).

This sequence belongs to the universal ribosomal protein uL24 family. Part of the 50S ribosomal subunit.

In terms of biological role, one of two assembly initiator proteins, it binds directly to the 5'-end of the 23S rRNA, where it nucleates assembly of the 50S subunit. One of the proteins that surrounds the polypeptide exit tunnel on the outside of the subunit. This chain is Large ribosomal subunit protein uL24, found in Thermus thermophilus (strain ATCC BAA-163 / DSM 7039 / HB27).